The primary structure comprises 286 residues: Nucleotide-binding protein HS_1178 (286 aa).

8–15 (GRSGAGKS) provides a ligand contact to ATP. Residue 56–59 (DIRN) participates in GTP binding.

Belongs to the RapZ-like family.

Displays ATPase and GTPase activities. The chain is Nucleotide-binding protein HS_1178 from Histophilus somni (strain 129Pt) (Haemophilus somnus).